A 376-amino-acid chain; its full sequence is 23S rRNA (uracil(747)-C(5))-methyltransferase RlmC (376 aa).

Residues C3, C11, C14, and C87 each contribute to the [4Fe-4S] cluster site. Positions 212, 241, 262, and 307 each coordinate S-adenosyl-L-methionine. Residue C334 is the Nucleophile of the active site.

This sequence belongs to the class I-like SAM-binding methyltransferase superfamily. RNA M5U methyltransferase family. RlmC subfamily.

It carries out the reaction uridine(747) in 23S rRNA + S-adenosyl-L-methionine = 5-methyluridine(747) in 23S rRNA + S-adenosyl-L-homocysteine + H(+). Functionally, catalyzes the formation of 5-methyl-uridine at position 747 (m5U747) in 23S rRNA. The chain is 23S rRNA (uracil(747)-C(5))-methyltransferase RlmC from Citrobacter koseri (strain ATCC BAA-895 / CDC 4225-83 / SGSC4696).